We begin with the raw amino-acid sequence, 450 residues long: tRNA modification GTPase MnmE (450 aa).

3 residues coordinate (6S)-5-formyl-5,6,7,8-tetrahydrofolate: Arg23, Glu79, and Lys118. Positions 214 to 374 (GITLILVGKP…LKEHILNKVG (161 aa)) constitute a TrmE-type G domain. Asn224 contributes to the K(+) binding site. GTP contacts are provided by residues 224-229 (NAGKSS), 243-249 (TSIAGTT), and 268-271 (DTAG). Ser228 is a binding site for Mg(2+). Positions 243, 245, and 248 each coordinate K(+). Thr249 contributes to the Mg(2+) binding site. Lys450 is a binding site for (6S)-5-formyl-5,6,7,8-tetrahydrofolate.

Belongs to the TRAFAC class TrmE-Era-EngA-EngB-Septin-like GTPase superfamily. TrmE GTPase family. As to quaternary structure, homodimer. Heterotetramer of two MnmE and two MnmG subunits. It depends on K(+) as a cofactor.

It localises to the cytoplasm. Functionally, exhibits a very high intrinsic GTPase hydrolysis rate. Involved in the addition of a carboxymethylaminomethyl (cmnm) group at the wobble position (U34) of certain tRNAs, forming tRNA-cmnm(5)s(2)U34. In Francisella tularensis subsp. tularensis (strain WY96-3418), this protein is tRNA modification GTPase MnmE.